We begin with the raw amino-acid sequence, 570 residues long: Urease subunit alpha (570 aa).

The 440-residue stretch at 131–570 folds into the Urease domain; that stretch reads GGFDSHIHFI…LPMAQRYFMY (440 aa). Ni(2+) contacts are provided by His-136, His-138, and Lys-219. Lys-219 carries the post-translational modification N6-carboxylysine. His-221 is a binding site for substrate. The Ni(2+) site is built by His-248 and His-274. Catalysis depends on His-322, which acts as the Proton donor. Residue Asp-362 participates in Ni(2+) binding.

This sequence belongs to the metallo-dependent hydrolases superfamily. Urease alpha subunit family. In terms of assembly, heterotrimer of UreA (gamma), UreB (beta) and UreC (alpha) subunits. Three heterotrimers associate to form the active enzyme. Requires Ni cation as cofactor. Carboxylation allows a single lysine to coordinate two nickel ions.

The protein localises to the cytoplasm. It catalyses the reaction urea + 2 H2O + H(+) = hydrogencarbonate + 2 NH4(+). The protein operates within nitrogen metabolism; urea degradation; CO(2) and NH(3) from urea (urease route): step 1/1. This Rhodopseudomonas palustris (strain HaA2) protein is Urease subunit alpha.